We begin with the raw amino-acid sequence, 381 residues long: MNEKSCSFHSKEELRDGQGERLSAGYSPSYDKDKSVLAFRGIPISELKNHGILQALTTEAYEWEPRVVSTEVVRAQEEWEAVDTIQPETGSQASSEQPGQLISFSEALQHFQTVDLSPFKKRIQPTIRRTGLAALRHYLFGPPKLHQRLREERDLVLTIAQCGLDSQDPVHGRVLQTIYKKLTGSKFDCALHGNHWEDLGFQGANPATDLRGAGFLALLHLLYLVMDSKTLPMAQEIFRLSRHHIQQFPFCLMSVNITHIAIQALREECLSRECNRQQKVIPVVNSFYAATFLHLAHVWRTQRKTISDSGFVLKELEVLAKKSPRRLLKTLELYLARVSKGQASLLGAQKCYGPEAPPFKDLTFTGESDLQSHSSEGVWLI.

The disordered stretch occupies residues 1-31 (MNEKSCSFHSKEELRDGQGERLSAGYSPSYD). Basic and acidic residues predominate over residues 9-19 (HSKEELRDGQG). The ELMO domain maps to 170–324 (VHGRVLQTIY…ELEVLAKKSP (155 aa)).

In terms of tissue distribution, both isoform 1 and isoform 6 are widely expressed.

The protein localises to the cell projection. Its subcellular location is the stereocilium. It localises to the kinocilium. The protein resides in the cytoplasm. It is found in the cytoskeleton. Its function is as follows. Acts as a GTPase-activating protein (GAP) for ARL2 with low specific activity. The polypeptide is ELMO domain-containing protein 3 (ELMOD3) (Homo sapiens (Human)).